Consider the following 206-residue polypeptide: Elongation factor Ts (206 aa).

The segment at 81–84 is involved in Mg(2+) ion dislocation from EF-Tu; that stretch reads TDFV.

The protein belongs to the EF-Ts family.

The protein resides in the cytoplasm. In terms of biological role, associates with the EF-Tu.GDP complex and induces the exchange of GDP to GTP. It remains bound to the aminoacyl-tRNA.EF-Tu.GTP complex up to the GTP hydrolysis stage on the ribosome. In Maridesulfovibrio salexigens (strain ATCC 14822 / DSM 2638 / NCIMB 8403 / VKM B-1763) (Desulfovibrio salexigens), this protein is Elongation factor Ts.